A 146-amino-acid chain; its full sequence is Putative pre-16S rRNA nuclease (146 aa).

Belongs to the YqgF nuclease family.

The protein localises to the cytoplasm. Its function is as follows. Could be a nuclease involved in processing of the 5'-end of pre-16S rRNA. In Pediococcus pentosaceus (strain ATCC 25745 / CCUG 21536 / LMG 10740 / 183-1w), this protein is Putative pre-16S rRNA nuclease.